Here is a 652-residue protein sequence, read N- to C-terminus: NAD(P)H-quinone oxidoreductase subunit 5, chloroplastic (652 aa).

The next 16 membrane-spanning stretches (helical) occupy residues 9–29 (WLIPIFPLAGSLLIGIGLISF), 40–60 (YSFLIIALLGISLILSCLILF), 91–111 (PLTAVMLVIVTTVAILVLIYT), 124–144 (FFAYLSLFTTSMLGLVLSPNL), 147–167 (IYVFWELVGMCSYLLIGFWFT), 188–208 (GLLLGILGFYWMTGSFEFDVI), 225–245 (LAIFFGFLIFLGPVAKSAQFP), 258–278 (TPISALIHAATMVAAGVFLVA), 289–309 (FLMDLIAWTGAITAIIGATIA), 327–347 (LGYMIMAMGMGSYTASLFHLM), 354–374 (ALLFLSAGSTIHGMEPIVGFN), 395–415 (GNAFLIGTLSLCGIPPLACFW), 424–444 (AFVHSPLLWFIGWSTAGLTSF), 482–502 (TLPLIILTLFSITIGWIGTPF), 526–546 (LFIAGSSVGIALLGCYTAYLI), and 630–650 (ILMIIFTLLTILGISQTYYSL).

It belongs to the complex I subunit 5 family. NDH is composed of at least 16 different subunits, 5 of which are encoded in the nucleus.

The protein resides in the plastid. It is found in the chloroplast thylakoid membrane. It catalyses the reaction a plastoquinone + NADH + (n+1) H(+)(in) = a plastoquinol + NAD(+) + n H(+)(out). It carries out the reaction a plastoquinone + NADPH + (n+1) H(+)(in) = a plastoquinol + NADP(+) + n H(+)(out). Its function is as follows. NDH shuttles electrons from NAD(P)H:plastoquinone, via FMN and iron-sulfur (Fe-S) centers, to quinones in the photosynthetic chain and possibly in a chloroplast respiratory chain. The immediate electron acceptor for the enzyme in this species is believed to be plastoquinone. Couples the redox reaction to proton translocation, and thus conserves the redox energy in a proton gradient. In Mesostigma viride (Green alga), this protein is NAD(P)H-quinone oxidoreductase subunit 5, chloroplastic (ndhF).